We begin with the raw amino-acid sequence, 956 residues long: Glutamate receptor ionotropic, kainate 4 (956 aa).

Positions 1–20 are cleaved as a signal peptide; it reads MPRVSAPLVLLPAWLVMVAC. The Extracellular segment spans residues 21 to 545; sequence SPHSLRIAAI…YFSFLDPFSP (525 aa). Asn-158, Asn-220, Asn-272, Asn-286, Asn-323, Asn-408, Asn-415, and Asn-479 each carry an N-linked (GlcNAc...) asparagine glycan. L-glutamate contacts are provided by Gly-500, Thr-502, and Arg-507. Residues 546–566 form a helical membrane-spanning segment; sequence GVWLFMLLAYLAVSCVLFLVA. Residues 567-623 are Cytoplasmic-facing; that stretch reads RLTPYEWYSPHPCAQGRCNLLVNQYSLGNSLWFPVGGFMQQGSTIAPRALSTRCVSG. A helical membrane pass occupies residues 624-644; sequence VWWAFTLIIISSYTANLAAFL. Over 645–804 the chain is Extracellular; sequence TVQRMDVPIE…HRAKGLGMEN (160 aa). The L-glutamate site is built by Ser-674, Ser-675, and Glu-723. Asn-736 carries an N-linked (GlcNAc...) asparagine glycan. A helical transmembrane segment spans residues 805-825; the sequence is IGGIFVVLICGLIVAIFMAML. The Cytoplasmic segment spans residues 826–956; that stretch reads EFLWTLRHSE…EKTTNSSEPE (131 aa). Disordered regions lie at residues 863–889 and 931–956; these read RRRA…TLSN and LRAR…SEPE. Basic and acidic residues predominate over residues 939–948; sequence RSEESLEWEK.

This sequence belongs to the glutamate-gated ion channel (TC 1.A.10.1) family. GRIK4 subfamily. As to quaternary structure, homodimer. Can form functional heteromeric receptors with GRIK1, GRIK2 and GRIK3.

The protein localises to the cell membrane. Its subcellular location is the postsynaptic cell membrane. It is found in the presynaptic cell membrane. Its function is as follows. Ionotropic glutamate receptor that functions as a cation-permeable ligand-gated ion channel. Cannot form functional channels on its own. Shows channel activity only in heteromeric assembly with GRIK1, GRIK2 and GRIK3 subunits. This Homo sapiens (Human) protein is Glutamate receptor ionotropic, kainate 4 (GRIK4).